The primary structure comprises 1085 residues: Solute carrier family 12 member 4 (1085 aa).

The Cytoplasmic portion of the chain corresponds to 1 to 119 (MPHFTVVPVD…RRAAKAPSMG (119 aa)). S24 carries the post-translational modification Phosphoserine. The span at 28-46 (YGERAEREDPDGHGNHRES) shows a compositional bias: basic and acidic residues. The disordered stretch occupies residues 28–47 (YGERAEREDPDGHGNHRESS). A phosphoserine mark is found at S47, S59, S81, and S88. The chain crosses the membrane as a discontinuously helical span at residues 120 to 141 (TLMGVYLPCLQNIFGVILFLRL). K(+) is bound by residues N131 and I132. At 142-149 (TWMVGTAG) the chain is on the extracellular side. The helical transmembrane segment at 150–172 (VLQALLIVLICCCCTLLTAISMS) threads the bilayer. Over 173–196 (AIATNGVVPAGGSYFMISRSLGPE) the chain is Cytoplasmic. Residues 197 to 225 (FGGAVGLCFYLGTTFAAAMYILGAIEILL) traverse the membrane as a helical segment. Y216 contributes to the K(+) binding site. Residues 226 to 248 (TYIAPPAAIFYPSGTHDTSNATL) are Extracellular-facing. An N-linked (GlcNAc...) asparagine glycan is attached at N245. Helical transmembrane passes span 249-271 (NNMRVYGTVFLSFMTLVVFVGVK) and 272-297 (YVNKFASLFLACVIISILSIYAGGIK). At 298-419 (SMFDPPVFPV…LYVVADIATS (122 aa)) the chain is on the extracellular side. A disulfide bond links C308 and C323. 3 N-linked (GlcNAc...) asparagine glycosylation sites follow: N312, N331, and N347. The cysteines at positions 343 and 353 are disulfide-linked. A helical transmembrane segment spans residues 420–440 (FTVLVGIFFPSVTGIMAGSNR). P429 and T432 together coordinate K(+). Chloride contacts are provided by G433, I434, and M435. Topologically, residues 441–450 (SGDLRDAQKS) are cytoplasmic. A helical transmembrane segment spans residues 451–473 (IPVGTILAIVTTSLVYFSSVVLF). The Extracellular segment spans residues 474–504 (GACIEGVVLRDKYGDGVSRNLVVGTLAWPSP). A helical membrane pass occupies residues 505-531 (WVIVVGSFFSTCGAGLQSLTGAPRLLQ). Over 532–554 (AIAKDNIIPFLRVFGHGKANGEP) the chain is Cytoplasmic. A run of 2 helical transmembrane segments spans residues 555–575 (TWALLLTALIAELGILIASLD) and 576–598 (MVAPILSMFFLMCYLFVNLACAV). Y589 is a chloride binding site. The Cytoplasmic portion of the chain corresponds to 599-612 (QTLLRTPNWRPRFK). The next 2 helical transmembrane spans lie at 613-635 (YYHWALSFLGMSLCLALMFVSSW) and 636-651 (YYALVAMLIAGMIYKY). Residues 652-1085 (IEYQGAEKEW…GGREVITIYS (434 aa)) are Cytoplasmic-facing. The tract at residues 665 to 681 (IRGLSLSAARYALLRLE) is scissor helix. 5 residues coordinate ATP: L697, K699, K707, Y708, and V730. Phosphoserine is present on S734. 3 residues coordinate ATP: G794, W795, and Y797. Residues S916 and S967 each carry the phosphoserine modification. T983 carries the phosphothreonine modification. S1050 bears the Phosphoserine mark.

This sequence belongs to the SLC12A transporter family. K/Cl co-transporter subfamily. Homodimer; adopts a domain-swap conformation at the scissor helices connecting the transmembrane domain and C-terminal domain. Heterodimer with other K-Cl cotransporters. In terms of processing, N-glycosylated. Phosphorylated, phosphorylation may regulate transporter activity.

It is found in the cell membrane. The catalysed reaction is K(+)(in) + chloride(in) = K(+)(out) + chloride(out). With respect to regulation, inhibited by WNK3. Its function is as follows. Mediates electroneutral potassium-chloride cotransport when activated by cell swelling. May contribute to cell volume homeostasis in single cells. May be involved in the regulation of basolateral Cl(-) exit in NaCl absorbing epithelia. The sequence is that of Solute carrier family 12 member 4 (SLC12A4) from Oryctolagus cuniculus (Rabbit).